A 347-amino-acid chain; its full sequence is CD5 antigen-like (347 aa).

The N-terminal stretch at 1-19 (MALLFSLILAICTRPGFLA) is a signal peptide. SRCR domains follow at residues 24 to 125 (VRLV…ASCE), 138 to 239 (VRLA…VECE), and 244 to 346 (LRLV…VICS). Intrachain disulfides connect cysteine 33–cysteine 67, cysteine 49–cysteine 114, cysteine 62–cysteine 124, cysteine 96–cysteine 106, cysteine 163–cysteine 228, cysteine 176–cysteine 238, cysteine 208–cysteine 218, cysteine 253–cysteine 287, cysteine 269–cysteine 335, cysteine 282–cysteine 345, and cysteine 315–cysteine 325.

In terms of assembly, interacts with FASN; the interaction is direct. Interacts (via SRCR2 and SRCR3) with pentameric IgM (via Fc region); disulfide-linked. In terms of processing, not N-glycosylated. Probably not O-glycosylated. In terms of tissue distribution, expressed in spleen, lymph node, thymus, bone marrow, and fetal liver, but not in non-lymphoid tissues.

The protein localises to the secreted. It is found in the cytoplasm. Its function is as follows. Secreted protein that acts as a key regulator of lipid synthesis: mainly expressed by macrophages in lymphoid and inflamed tissues and regulates mechanisms in inflammatory responses, such as infection or atherosclerosis. Able to inhibit lipid droplet size in adipocytes. Following incorporation into mature adipocytes via CD36-mediated endocytosis, associates with cytosolic FASN, inhibiting fatty acid synthase activity and leading to lipolysis, the degradation of triacylglycerols into glycerol and free fatty acids (FFA). CD5L-induced lipolysis occurs with progression of obesity: participates in obesity-associated inflammation following recruitment of inflammatory macrophages into adipose tissues, a cause of insulin resistance and obesity-related metabolic disease. Regulation of intracellular lipids mediated by CD5L has a direct effect on transcription regulation mediated by nuclear receptors ROR-gamma (RORC). Acts as a key regulator of metabolic switch in T-helper Th17 cells. Regulates the expression of pro-inflammatory genes in Th17 cells by altering the lipid content and limiting synthesis of cholesterol ligand of RORC, the master transcription factor of Th17-cell differentiation. CD5L is mainly present in non-pathogenic Th17 cells, where it decreases the content of polyunsaturated fatty acyls (PUFA), affecting two metabolic proteins MSMO1 and CYP51A1, which synthesize ligands of RORC, limiting RORC activity and expression of pro-inflammatory genes. Participates in obesity-associated autoimmunity via its association with IgM, interfering with the binding of IgM to Fcalpha/mu receptor and enhancing the development of long-lived plasma cells that produce high-affinity IgG autoantibodies. Also acts as an inhibitor of apoptosis in macrophages: promotes macrophage survival from the apoptotic effects of oxidized lipids in case of atherosclerosis. Involved in early response to microbial infection against various pathogens by acting as a pattern recognition receptor and by promoting autophagy. This Homo sapiens (Human) protein is CD5 antigen-like (CD5L).